The sequence spans 364 residues: Apyrase (364 aa).

Positions 1–35 (MRSSYRVGNPIRFQPTNVVGLLLLSLVLSFMLVQS) are cleaved as a signal peptide.

It belongs to the apyrase family. The cofactor is Ca(2+). In terms of tissue distribution, salivary gland (at protein level).

The protein resides in the secreted. It carries out the reaction a ribonucleoside 5'-triphosphate + 2 H2O = a ribonucleoside 5'-phosphate + 2 phosphate + 2 H(+). In terms of biological role, facilitates hematophagy by inhibiting ADP-dependent platelet aggregation in the host. Cleaves adenosine triphosphate (ATP) and adenosine diphosphate (ADP) to adenosine monophosphate (AMP) and inorganic phosphate in calcium-dependent manner. This is Apyrase from Cimex lectularius (Bed bug).